The following is a 435-amino-acid chain: MLQCAPKKNERLRGSCDFCTQSKLRCNKNKPSCRRCTIQQQPCVYSVARRTGRPPKRPRKANDGQEANEQHGDQDPVTSTPGGSCQQQSNHLLDVEGDGANFTLADASTTAQDRETAACTALDNALLMGGTFGFSSLLDDPLIQSDDFLSFSLCMPPGEEEGHMASPCSPPILPSIDVPHLPARFGFLESSVESGLHGRNGPHLIEQPDKTVPSSFSEMEKIYDEGLTFSGLDSAINAVTNNGKGEPSIPGTMAAHPHSKRQCFCSTSMSKLQMLVSHPTLCQKNSRARFDMTLFLEEVVFSIYRDVLQCLVCQSKSLHSLASLCICTDWVIEALRDVAQDLSSGQDNLGGFRAGLCPPKDKFSICVGRFVLDDQLRESCTRSLVRYRLRKLIPIMDTMMKLNYRGAGGALSQAIRTMVEDVRHKIESALGMMEL.

Residues 16 to 43 constitute a DNA-binding region (zn(2)-C6 fungal-type); that stretch reads CDFCTQSKLRCNKNKPSCRRCTIQQQPC. Residues 48–89 form a disordered region; it reads ARRTGRPPKRPRKANDGQEANEQHGDQDPVTSTPGGSCQQQS. Residues 50-59 are compositionally biased toward basic residues; sequence RTGRPPKRPR. Positions 60 to 74 are enriched in basic and acidic residues; it reads KANDGQEANEQHGDQ. Residues 76–89 are compositionally biased toward polar residues; the sequence is PVTSTPGGSCQQQS.

The protein resides in the nucleus. Functionally, transcription factor that regulates the expression of the gene clusters that mediate the biosynthesis of the host-selective toxins (HSTs) ACT-toxins responsible for brown spot of tangerine disease by the tangerine pathotype which affects tangerines and mandarins. ACT-toxins consist of three moieties, 9,10-epoxy-8-hydroxy-9-methyl-decatrienoic acid (EDA), valine and a polyketide. ACT-toxin I is toxic to both citrus and pear; toxin II the 5''-deoxy derivative of ACT-toxin I, is highly toxic to pear and slightly toxic to citrus. On cellular level, ACT-toxins affect plasma membrane of susceptible cells and cause a sudden increase in loss of K(+) after a few minutes of toxin treatment. The sequence is that of Transcription activator ACTTR from Alternaria alternata (Alternaria rot fungus).